The chain runs to 132 residues: mRNA interferase toxin YafO (132 aa).

As to quaternary structure, probably forms a complex with the antitoxin YafN which inhibits the mRNA interferase activity.

Its function is as follows. Toxic component of a type II toxin-antitoxin (TA) system. A translation-dependent mRNA interferase. Overexpression causes cessation of cell growth and inhibits cell proliferation via inhibition of translation; this blockage is overcome by subsequent expression of antitoxin YafN. Overexpression causes cleavage of a number of mRNAs in a ribosome-dependent fashion. YafO binding to the 50S ribosomal subunit in the translation complex induces mRNA cleavage 3' to the region protected by the ribosome; YafO alone is not able to digest mRNA. This Escherichia coli (strain K12) protein is mRNA interferase toxin YafO (yafO).